We begin with the raw amino-acid sequence, 206 residues long: Small ribosomal subunit protein uS4 (206 aa).

One can recognise an S4 RNA-binding domain in the interval 96-156 (CRLDNVVYRM…EKAKNQLRIV (61 aa)).

Belongs to the universal ribosomal protein uS4 family. As to quaternary structure, part of the 30S ribosomal subunit. Contacts protein S5. The interaction surface between S4 and S5 is involved in control of translational fidelity.

Functionally, one of the primary rRNA binding proteins, it binds directly to 16S rRNA where it nucleates assembly of the body of the 30S subunit. In terms of biological role, with S5 and S12 plays an important role in translational accuracy. This is Small ribosomal subunit protein uS4 from Pseudomonas fluorescens (strain ATCC BAA-477 / NRRL B-23932 / Pf-5).